The primary structure comprises 310 residues: Ribonuclease Z (310 aa).

Positions 64, 66, 68, 69, 142, 213, and 271 each coordinate Zn(2+). The active-site Proton acceptor is D68.

It belongs to the RNase Z family. As to quaternary structure, homodimer. Requires Zn(2+) as cofactor.

The catalysed reaction is Endonucleolytic cleavage of RNA, removing extra 3' nucleotides from tRNA precursor, generating 3' termini of tRNAs. A 3'-hydroxy group is left at the tRNA terminus and a 5'-phosphoryl group is left at the trailer molecule.. Its function is as follows. Zinc phosphodiesterase, which displays some tRNA 3'-processing endonuclease activity. Probably involved in tRNA maturation, by removing a 3'-trailer from precursor tRNA. This is Ribonuclease Z from Treponema pallidum (strain Nichols).